The chain runs to 310 residues: Transcription initiation factor IIB (310 aa).

The TFIIB-type zinc finger occupies 9–41 (EKETKCPECGSDDLRGDYERAEIVCGKCGLVID). Cys14, Cys17, Cys33, and Cys36 together coordinate Zn(2+). 2 tandem repeats follow at residues 127 to 210 (SELD…TREL) and 221 to 302 (DYVP…ELTE).

The protein belongs to the TFIIB family.

Its function is as follows. Stabilizes TBP binding to an archaeal box-A promoter. Also responsible for recruiting RNA polymerase II to the pre-initiation complex (DNA-TBP-TFIIB). The chain is Transcription initiation factor IIB from Methanothermobacter thermautotrophicus (strain ATCC 29096 / DSM 1053 / JCM 10044 / NBRC 100330 / Delta H) (Methanobacterium thermoautotrophicum).